The primary structure comprises 311 residues: CD-NTase-associated protein 12 (311 aa).

The TIR domain occupies 4–121 (RIFIGSSKEG…LLGITVPQFE (118 aa)). An STING domain region spans residues 157–311 (STVLAIGYFY…RNIVKIIQEE (155 aa)). 3',3'-c-di-GMP-binding residues include F168, P232, and D249.

In the C-terminal section; belongs to the bacterial STING family. Forms homodimers; in the presence of c-di-GMP forms filaments with an ordered array of parallel-stacked subunits.

It carries out the reaction NAD(+) + H2O = ADP-D-ribose + nicotinamide + H(+). NAD(+) hydrolase activity is strongly stimulated by c-di-GMP, weakly by 3'3'-cGAMP, very weakly by c-di-AMP but not at all by 2'3'-cGAMP. Self-association of TIR domains is required for NADase activity. In terms of biological role, effector protein of a CBASS antiviral system with NAD(+) hydrolase activity. CBASS (cyclic oligonucleotide-based antiphage signaling system) provides immunity against bacteriophage. The CD-NTase protein synthesizes cyclic nucleotides in response to infection; these serve as specific second messenger signals. The signals activate a diverse range of effectors, leading to bacterial cell death and thus abortive phage infection. A type I-D CBASS(GG) system. Functionally, binds c-di-GMP, does not bind cUMP-AMP. Upon activation by c-di-GMP forms filaments which hydrolyze NAD(+); filament formation is required for enzyme activation. The chain is CD-NTase-associated protein 12 from Flavobacterium daejeonense.